The primary structure comprises 161 residues: Putative pre-16S rRNA nuclease (161 aa).

The segment at A141–A161 is disordered.

The protein belongs to the YqgF nuclease family.

It localises to the cytoplasm. Functionally, could be a nuclease involved in processing of the 5'-end of pre-16S rRNA. This is Putative pre-16S rRNA nuclease from Clavibacter michiganensis subsp. michiganensis (strain NCPPB 382).